Here is a 1684-residue protein sequence, read N- to C-terminus: MSFVGGGGCGGQDVHKFVEALQADFKTLSLETKKKYPQIKEACEEAISKLCTAGSSQQNSVYYTVNQILYPLVQGCETKDLKIIKFCLGMMQRLITQQVVDQKGALYITNALWTLMENNIEEVKVLQTVTLLLTTNTVVHGDTLAKALVLCFRLHYAKNPTIVNTAGATIRQLVSLVFERVYLEKDSVSSLQQQQSSGSPAEGEGGNQDVQTFASDAFLLFQDLVQLVNADQPYWLLGMTEMTRTFGLELLEAVLTNFSAVFHESNDFRLLLKERVCALVIKLFSPNVKHRQLPAPSNGNAPVPAEKPYFPISMRLLRLVAILIQKYHTILVTECEIFLSLIIKFLDPDKPAWQRALALEVIHKLVTRSSLIAFFCKSYDLKNHATNIVHDMIAAMGSYIRYSLINASAMLNGQQNGVANSLTAMSGSNQCGFMFRGAYLPLVATYAPGVSKAVYLEMLDKIDASNIPDSYGISVGHAILLDMTRSIGGVIQRTPELHPSHNTAVITEEEHKPLCLQLVNSSWSALLSAFIPLVETSIDEATTENILKAMQNYAALCGMLEQLQPRDAFIMAMCRASFPPHYAMSIFANTTQSDGDLRCHTRSGSQDLSSQFINSCSGDAGDFRPQIVAVGTPLPSASLPHSVMQAPVMLTNKNLQCMRAILFLAHNNGGILGTSWHIVLQTLQHLVWILGLKPSTGGSLQAMPKPAVEANVGIQTAVMADLPVLSQMLSQLFESSQYLDDVALHHLIDALCKLSHEAMELAYANREPSLFAVAKLLETGLVNMPRIKVLWRPLTNHLLEVCQHRHIRMREWGVEAITYLVKSALQFKHKTPLKENMELQTMLLSPLSELSTVLHADVRQRQLDCVLQILNTAGEILSFGWPAIIEIIGAVNEHHGEPLIRTAFQCLQLVITDFLTVMPWRCLPLCISTAAKFGSQTQELNISLTAIGLMWNISDFFNQNQDKLMSTQLQDVSILPDFPGTVKMPQFDKLWMCLYAKLGELCVDLRPAVRKSAGQTLFSTISAHGSLLNPPTWQALVWQVLFPLLDNVRALSSSASNEKVDASGNILIHHSRNTAQKQWAETQVLTLSGVCRVFNTKRELLQMLGDFERAWSLILEFIQNAALSKNGEVSLAALKSLQEIMYHNTAERTERALKDPQTAQEQDEEIWTIAWNIWLSIGMESTKMSTSTSAKLQQQNSNGAETQEDFYIPSQAFLTALIQIFPAIFQHIQVKFTAADFDKFCTVLTNAVCIPVQTDAVPYIMSTVSDTLLTPLHDGILDCMELIQKEATKPDSHISQLIPAIFRQLLIFSKFACAPPTFQQSVEHKYAKSSGHYANNASVEVVSMNYIPFGEKSISICVKLYQTTATEDSVVQEQILHDIVKALRTPLAMKYKCLSSSTWKLAISSLISVLHTGLKVARAKPQHFASLWDDLADTLDKFLFPASVCTIEDRGLEEIVLDETIDCQVIELLRDEVLPHSHEMPHQFIMQIVVLLNKGSIHSASDTNICYESDWKLREIFAKTCFETLLQFSLLEDHANTNNNRLNANVLTAGAAGAGGKDFAGRLAVTALLHRFQEVLKRFNDDERQSGKCPLPRFRLSEISFVLKAIATLVVSMKKAPASKVNKPAWDQLIGLYPYLVDCTTTTSPEVSRSLREALLQYTDLLQAPRSCSAATSNDNVIQSNGQE.

The protein belongs to the MON2 family.

Functionally, may be required for traffic between late Golgi and early endosomes. This is Protein MON2 homolog (mon2) from Drosophila melanogaster (Fruit fly).